The chain runs to 34 residues: Beta-theraphotoxin-Pmu1a (34 aa).

Intrachain disulfides connect Cys3/Cys18, Cys10/Cys23, and Cys17/Cys30. At Leu34 the chain carries Leucine amide.

It belongs to the neurotoxin 10 (Hwtx-1) family. 34 (Jztx-26) subfamily. As to expression, expressed by the venom gland.

It localises to the secreted. Functionally, spider venom neurotoxin that blocks voltage-gated sodium channels Nav1.3/SCN3A and Nav1.8/SCN10A in human (IC(50)=2 uM and IC(50)=4 uM, respectively) and rat (IC(50)=2 uM and IC(50)=2.5 uM, respectively). In Pterinochilus murinus (Mombasa golden starburst baboon spider), this protein is Beta-theraphotoxin-Pmu1a.